Reading from the N-terminus, the 400-residue chain is MCSIGEDDFGDEGATHAMLPGSSTVGTVITAGSCNKCGLNSLELYKLNFRAAECHQCFLSYARHKFRAALGAAKALPRNAEVLLLVDGSAESLVLLDMLHFAQTQNTFKRLHCSARVLHIDAQSSPSENDPLPMLNELRERYAPFEFYVIQLGAEVHSLKLLKDYSASRLDSTDNKLRSLTARQDYVRQQRKRLIGAVALQLQCTHVFEPSISSSLAAQLLTSVALGRGGSVALDVALLDDRLQGAVTLLRPLKDLNEQEVQFYIKAQQLKPFRSDESSLLSDASLQNLTSAFVANLQLNYASTVSTVFRTGDKIAAKRQPIEEGPSTCALCQSDLDSGLSDTLLAIEYSRAVSEMGVALQQQNNMEALEQRARERLNSMDNLCHACRNIHAELTHGSLI.

It belongs to the CTU2/NCS2 family.

The protein localises to the cytoplasm. Its pathway is tRNA modification; 5-methoxycarbonylmethyl-2-thiouridine-tRNA biosynthesis. Plays a central role in 2-thiolation of mcm(5)S(2)U at tRNA wobble positions of tRNA(Lys), tRNA(Glu) and tRNA(Gln). May act by forming a heterodimer with NCS6/CTU1 that ligates sulfur from thiocarboxylated URM1 onto the uridine of tRNAs at wobble position. The chain is Cytoplasmic tRNA 2-thiolation protein 2 from Drosophila virilis (Fruit fly).